A 496-amino-acid chain; its full sequence is Costunolide synthase (496 aa).

Residues 4–24 form a helical; Signal-anchor for type II membrane protein membrane-spanning segment; that stretch reads FTIFSLVVASLVFFACWALVA. N-linked (GlcNAc...) asparagine glycans are attached at residues Asn26, Asn168, Asn280, and Asn412. Heme is bound at residue Cys434.

It belongs to the cytochrome P450 family. Heme serves as cofactor. As to expression, expressed in floral glandular trichomes.

It is found in the membrane. It carries out the reaction germacra-1(10),4,11(13)-trien-12-oate + reduced [NADPH--hemoprotein reductase] + O2 = (+)-costunolide + oxidized [NADPH--hemoprotein reductase] + 2 H2O. Its pathway is secondary metabolite biosynthesis; terpenoid biosynthesis. Functionally, involved in the biosynthesis of germacrene-derived sesquiterpene lactones. Component of the parthenolide biosynthetic pathway; parthenolide and conjugates are promising anti-cancer drugs highly active against colon cancer cells. Hydroxylates germacrene A acid to 6-alpha-hydroxy-germacrene A acid, a precursor of sesquiterpene lactones that spontaneously undergoes a lactonization which yields costunolide. This chain is Costunolide synthase, found in Tanacetum parthenium (Feverfew).